The primary structure comprises 302 residues: Dihydroorotate dehydrogenase B (NAD(+)), catalytic subunit (302 aa).

Residues S23 and K47–G48 contribute to the FMN site. Substrate is bound by residues K47 and N71–L75. Residues N101 and N128 each coordinate FMN. N128 serves as a coordination point for substrate. C131 serves as the catalytic Nucleophile. Residues K166 and I192 each coordinate FMN. A substrate-binding site is contributed by N193–T194. Residues G218, G244–G245, and G266–T267 contribute to the FMN site.

It belongs to the dihydroorotate dehydrogenase family. Type 1 subfamily. As to quaternary structure, heterotetramer of 2 PyrK and 2 PyrD type B subunits. FMN is required as a cofactor.

The protein localises to the cytoplasm. It carries out the reaction (S)-dihydroorotate + NAD(+) = orotate + NADH + H(+). The protein operates within pyrimidine metabolism; UMP biosynthesis via de novo pathway; orotate from (S)-dihydroorotate (NAD(+) route): step 1/1. In terms of biological role, catalyzes the conversion of dihydroorotate to orotate with NAD(+) as electron acceptor. The polypeptide is Dihydroorotate dehydrogenase B (NAD(+)), catalytic subunit (pyrD) (Alkaliphilus metalliredigens (strain QYMF)).